The following is a 109-amino-acid chain: MAYQLYRNTTLGNSLQESLDELIQSQQITPQLALQVLLQFDKAINAALAQRVRNRVNFRGSLNTYRFCDNVWTFVLNDVEFREVTELIKVDKVKIVACDGKNTGSNTTE.

This sequence belongs to the TFIIA subunit 2 family. TFIIA is a heterodimer of the large unprocessed subunit 1 and a small subunit gamma. It was originally believed to be a heterotrimer of an alpha (p35), a beta (p19) and a gamma subunit (p12). Interacts with NCOA6 general coactivator. TFIIA forms a complex with TBP. Interacts with HSF1 (via transactivation domain). Part of TBP-based Pol II pre-initiation complex (PIC), in which Pol II core assembles with general transcription factors and other specific initiation factors including GTF2E1, GTF2E2, GTF2F1, GTF2F2, TCEA1, ERCC2, ERCC3, GTF2H2, GTF2H3, GTF2H4, GTF2H5, GTF2A1, GTF2A2, GTF2B and TBP; this large multi-subunit PIC complex mediates DNA unwinding and targets Pol II core to the transcription start site where the first phosphodiester bond forms. In terms of assembly, (Microbial infection) Interacts with SV40 Large T antigen.

The protein resides in the nucleus. Its function is as follows. TFIIA is a component of the transcription machinery of RNA polymerase II and plays an important role in transcriptional activation. TFIIA in a complex with TBP mediates transcriptional activity. The protein is Transcription initiation factor IIA subunit 2 (GTF2A2) of Homo sapiens (Human).